Here is an 86-residue protein sequence, read N- to C-terminus: DNA-directed RNA polymerase subunit omega (86 aa).

This sequence belongs to the RNA polymerase subunit omega family. As to quaternary structure, the RNAP catalytic core consists of 2 alpha, 1 beta, 1 beta' and 1 omega subunit. When a sigma factor is associated with the core the holoenzyme is formed, which can initiate transcription.

It catalyses the reaction RNA(n) + a ribonucleoside 5'-triphosphate = RNA(n+1) + diphosphate. Promotes RNA polymerase assembly. Latches the N- and C-terminal regions of the beta' subunit thereby facilitating its interaction with the beta and alpha subunits. The protein is DNA-directed RNA polymerase subunit omega of Psychrobacter arcticus (strain DSM 17307 / VKM B-2377 / 273-4).